The sequence spans 682 residues: Methionine--tRNA ligase (682 aa).

Residues 12–22 carry the 'HIGH' region motif; sequence PYANGAIHLGH. 4 residues coordinate Zn(2+): C143, C146, C156, and C159. A 'KMSKS' region motif is present at residues 328-332; the sequence is KMSKS. K331 contributes to the ATP binding site. The region spanning 580–682 is the tRNA-binding domain; sequence DFAKLDLRVA…EGIRPGMQVK (103 aa).

This sequence belongs to the class-I aminoacyl-tRNA synthetase family. MetG type 1 subfamily. In terms of assembly, homodimer. Requires Zn(2+) as cofactor.

It localises to the cytoplasm. It catalyses the reaction tRNA(Met) + L-methionine + ATP = L-methionyl-tRNA(Met) + AMP + diphosphate. Is required not only for elongation of protein synthesis but also for the initiation of all mRNA translation through initiator tRNA(fMet) aminoacylation. This Actinobacillus pleuropneumoniae serotype 7 (strain AP76) protein is Methionine--tRNA ligase.